Consider the following 394-residue polypeptide: Seipin (394 aa).

Residues M1 to L27 lie on the Cytoplasmic side of the membrane. Residues L28 to L48 traverse the membrane as a helical segment. Over Y49 to N242 the chain is Lumenal. N-linked (GlcNAc...) asparagine glycans are attached at residues N88 and N242. Residues F243 to W263 form a helical membrane-spanning segment. Residues P264 to S394 are Cytoplasmic-facing. Positions R281–S394 are disordered. Phosphoserine is present on S289. Residues Q292–Q303 are compositionally biased toward low complexity. Residues S346 and S351 each carry the phosphoserine modification.

This sequence belongs to the seipin family. As to quaternary structure, undecamer (an oligomer having eleven subunits). Oligomerization is important for its function in lipid droplet formation. Interacts with LDAF1 to form an oligomeric complex. Interacts with RAB18. Interacts with ZFYVE1 in a RAB18-dependent manner.

Its subcellular location is the endoplasmic reticulum membrane. The protein localises to the lipid droplet. Plays a crucial role in the formation of lipid droplets (LDs) which are storage organelles at the center of lipid and energy homeostasis. In association with LDAF1, defines the sites of LD formation in the ER. Also required for growth and maturation of small nascent LDs into larger mature LDs. Mediates the formation and/or stabilization of endoplasmic reticulum-lipid droplets (ER-LD) contacts, facilitating protein and lipid delivery from the ER into growing LDs. Regulates the maturation of ZFYVE1-positive nascent LDs and the function of the RAB18-ZFYVE1 complex in mediating the formation of ER-LD contacts. Binds anionic phospholipids including phosphatidic acid. Plays an important role in the differentiation and development of adipocytes. This chain is Seipin, found in Bos taurus (Bovine).